Reading from the N-terminus, the 185-residue chain is Lysozyme g (185 aa).

2 cysteine pairs are disulfide-bonded: Cys4–Cys60 and Cys18–Cys29. Glu73 is a catalytic residue.

It belongs to the glycosyl hydrolase 23 family.

It localises to the secreted. The enzyme catalyses Hydrolysis of (1-&gt;4)-beta-linkages between N-acetylmuramic acid and N-acetyl-D-glucosamine residues in a peptidoglycan and between N-acetyl-D-glucosamine residues in chitodextrins.. This chain is Lysozyme g, found in Cygnus atratus (Black swan).